Consider the following 1210-residue polypeptide: Histone-lysine N-methyltransferase EHMT2 (1210 aa).

The segment covering 1–23 (MAAAAGAAAAAAAEGEAPAEMGA) has biased composition (low complexity). Disordered stretches follow at residues 1 to 262 (MAAA…LEEW) and 280 to 386 (DERV…EYME). Ala2 bears the N-acetylalanine mark. The segment covering 26–38 (LEKETRGATERVH) has biased composition (basic and acidic residues). At Ser40 the chain carries Phosphoserine. A Phosphothreonine modification is found at Thr44. Ser47 bears the Phosphoserine mark. Low complexity predominate over residues 105–128 (GRILLGHATKSFPSSPSKGGSCPS). The residue at position 140 (Ser140) is a Phosphoserine. The span at 155–165 (PGAQGAAAAGS) shows a compositional bias: low complexity. Position 173 is a phosphoserine (Ser173). Lys185 is subject to N6,N6,N6-trimethyllysine; by EHMT2; alternate. Lys185 bears the N6,N6-dimethyllysine; by EHMT2; alternate mark. Residues 198–216 (PEKRPPEIQHFRMSDDVHS) are compositionally biased toward basic and acidic residues. Residues Lys219 and Lys229 each participate in a glycyl lysine isopeptide (Lys-Gly) (interchain with G-Cter in SUMO2) cross-link. A phosphoserine mark is found at Ser232, Ser242, and Ser246. Over residues 280-291 (DERVDSDSKSEV) the composition is skewed to basic and acidic residues. A compositionally biased stretch (acidic residues) spans 298–327 (LSEEEEEEEEEEEEEEEEEEEEEEEEDEES). The segment covering 338 to 347 (GRRKAKKKWR) has biased composition (basic residues). Phosphoserine is present on residues Ser350, Ser412, and Ser413. A disordered region spans residues 548–608 (IPRGDGVTPP…LADTIDSSGP (61 aa)). Phosphothreonine is present on Thr555. Ser569 is modified (phosphoserine). Lys634 is covalently cross-linked (Glycyl lysine isopeptide (Lys-Gly) (interchain with G-Cter in SUMO2)). ANK repeat units lie at residues 649 to 678 (FHPR…DPNF), 684 to 713 (SKRT…NINA), 717 to 746 (QQRT…CVYS), 750 to 780 (DGST…DVNA), 784 to 813 (GGWT…DVTL), 817 to 846 (EENI…DLHA), and 850 to 879 (HGDT…NPEL). The tract at residues 817–819 (EEN) is histone H3K9me binding. One can recognise a Pre-SET domain in the interval 972 to 1035 (QHCTCVDDCS…NCKNRVVQSG (64 aa)). Residues Cys974, Cys976, Cys980, Cys985, Cys987, Cys1017, Cys1021, Cys1023, and Cys1027 each coordinate Zn(2+). Residues 1038–1155 (VRLQLYRTAK…TGEELGFDYG (118 aa)) form the SET domain. S-adenosyl-L-methionine-binding positions include 1048–1050 (MGW), Tyr1085, and 1112–1113 (NH). The interaction with histone H3 stretch occupies residues 1074 to 1093 (DAEADVREDDSYLFDLDNKD). Cys1115 serves as a coordination point for Zn(2+). The tract at residues 1154–1157 (YGDR) is interaction with histone H3. Positions 1164–1180 (KYFTCQCGSEKCKHSAE) constitute a Post-SET domain. Position 1168 (Cys1168) interacts with Zn(2+). An S-adenosyl-L-methionine-binding site is contributed by Gln1169. The Zn(2+) site is built by Cys1170 and Cys1175. Ser1204 is subject to Phosphoserine. Position 1210 is a phosphothreonine (Thr1210).

Belongs to the class V-like SAM-binding methyltransferase superfamily. Histone-lysine methyltransferase family. Suvar3-9 subfamily. In terms of assembly, heterodimer; heterodimerizes with EHMT1/GLP. Interacts with GFI1B and WIZ. Part of the E2F6.com-1 complex in G0 phase composed of E2F6, MGA, MAX, TFDP1, CBX3, BAT8, EHMT1, RING1, RNF2, MBLR, L3MBTL2 and YAF2. Part of a complex composed of TRIM28, HDAC1, HDAC2 and EHMT2. Interacts with UHRF1. Interacts with CDYL. Interacts with REST only in the presence of CDYL. Part of a complex containing at least CDYL, REST, WIZ, SETB1, EHMT1 and EHMT2. Interacts with PRDM9 and CDYL; interaction only takes place when PRDM9 is bound to hotspot DNA. Interacts with SMYD5. Post-translationally, methylated at Lys-185; automethylated. Expressed in all tissues examined, with high levels in fetal liver, thymus, lymph node, spleen and peripheral blood leukocytes and lower level in bone marrow.

It is found in the nucleus. It localises to the chromosome. The catalysed reaction is N(6)-methyl-L-lysyl(9)-[histone H3] + S-adenosyl-L-methionine = N(6),N(6)-dimethyl-L-lysyl(9)-[histone H3] + S-adenosyl-L-homocysteine + H(+). It catalyses the reaction L-lysyl(9)-[histone H3] + S-adenosyl-L-methionine = N(6)-methyl-L-lysyl(9)-[histone H3] + S-adenosyl-L-homocysteine + H(+). Histone methyltransferase that specifically mono- and dimethylates 'Lys-9' of histone H3 (H3K9me1 and H3K9me2, respectively) in euchromatin. H3K9me represents a specific tag for epigenetic transcriptional repression by recruiting HP1 proteins to methylated histones. Also mediates monomethylation of 'Lys-56' of histone H3 (H3K56me1) in G1 phase, leading to promote interaction between histone H3 and PCNA and regulating DNA replication. Also weakly methylates 'Lys-27' of histone H3 (H3K27me). Also required for DNA methylation, the histone methyltransferase activity is not required for DNA methylation, suggesting that these 2 activities function independently. Probably targeted to histone H3 by different DNA-binding proteins like E2F6, MGA, MAX and/or DP1. May also methylate histone H1. In addition to the histone methyltransferase activity, also methylates non-histone proteins: mediates dimethylation of 'Lys-373' of p53/TP53. Also methylates CDYL, WIZ, ACIN1, DNMT1, HDAC1, ERCC6, KLF12 and itself. In Homo sapiens (Human), this protein is Histone-lysine N-methyltransferase EHMT2 (EHMT2).